A 427-amino-acid polypeptide reads, in one-letter code: Glutamate-1-semialdehyde 2,1-aminomutase (427 aa).

Residue K268 is modified to N6-(pyridoxal phosphate)lysine.

Belongs to the class-III pyridoxal-phosphate-dependent aminotransferase family. HemL subfamily. The cofactor is pyridoxal 5'-phosphate.

The protein resides in the cytoplasm. The catalysed reaction is (S)-4-amino-5-oxopentanoate = 5-aminolevulinate. The protein operates within porphyrin-containing compound metabolism; protoporphyrin-IX biosynthesis; 5-aminolevulinate from L-glutamyl-tRNA(Glu): step 2/2. This Methanococcus vannielii (strain ATCC 35089 / DSM 1224 / JCM 13029 / OCM 148 / SB) protein is Glutamate-1-semialdehyde 2,1-aminomutase.